Here is a 247-residue protein sequence, read N- to C-terminus: Lys-63-specific deubiquitinase BRCC36 (247 aa).

Residue A2 is modified to N-acetylalanine. In terms of domain architecture, MPN spans V12–Q179. 3 residues coordinate Zn(2+): H122, H124, and D135. Positions H122–D135 match the JAMM motif motif. Position 189 is a phosphoserine (S189).

It belongs to the peptidase M67A family. BRCC36 subfamily. In terms of assembly, component of the ARISC complex, at least composed of UIMC1/RAP80, ABRAXAS1, BRCC3/BRCC36, BABAM2 and BABAM1/NBA1. Component of the BRCA1-A complex, at least composed of BRCA1, BARD1, UIMC1/RAP80, ABRAXAS1, BRCC3/BRCC36, BABAM2 and BABAM1/NBA1. In the BRCA1-A complex, interacts directly with ABRAXAS1 and BABAM2. Component of the BRISC complex, at least composed of ABRAXAS2, BRCC3/BRCC36, BABAM2 and BABAM1/NBA1. Identified in a complex with SHMT2 and the other subunits of the BRISC complex. In the BRISC complex, interacts directly with ABRAXAS2. Identified in a complex with ABRAXAS2 and NUMA1. The BRISC complex interacts with the CSN complex. Component of the BRCA1/BRCA2 containing complex (BRCC), which also contains BRCA1, BRCA2, BARD1, BABAM2 and RAD51. BRCC is a ubiquitin E3 ligase complex that enhances cellular survival following DNA damage. Interacts with BRCA1. Binds polyubiquitin. Interacts with PWWP2B. Interacts with HDAC1; this interaction is enhanced in the presence of PWWP2B. Requires Zn(2+) as cofactor.

It localises to the nucleus. The protein resides in the cytoplasm. The protein localises to the cytoskeleton. Its subcellular location is the spindle pole. In terms of biological role, metalloprotease that specifically cleaves 'Lys-63'-linked polyubiquitin chains. Does not have activity toward 'Lys-48'-linked polyubiquitin chains. Component of the BRCA1-A complex, a complex that specifically recognizes 'Lys-63'-linked ubiquitinated histones H2A and H2AX at DNA lesions sites, leading to target the BRCA1-BARD1 heterodimer to sites of DNA damage at double-strand breaks (DSBs). In the BRCA1-A complex, it specifically removes 'Lys-63'-linked ubiquitin on histones H2A and H2AX, antagonizing the RNF8-dependent ubiquitination at double-strand breaks (DSBs). Catalytic subunit of the BRISC complex, a multiprotein complex that specifically cleaves 'Lys-63'-linked ubiquitin in various substrates. Mediates the specific 'Lys-63'-specific deubiquitination associated with the COP9 signalosome complex (CSN), via the interaction of the BRISC complex with the CSN complex. The BRISC complex is required for normal mitotic spindle assembly and microtubule attachment to kinetochores via its role in deubiquitinating NUMA1. Plays a role in interferon signaling via its role in the deubiquitination of the interferon receptor IFNAR1; deubiquitination increases IFNAR1 activity by enhancing its stability and cell surface expression. Acts as a regulator of the NLRP3 inflammasome by mediating deubiquitination of NLRP3, leading to NLRP3 inflammasome assembly. Down-regulates the response to bacterial lipopolysaccharide (LPS) via its role in IFNAR1 deubiquitination. Deubiquitinates HDAC1 and PWWP2B leading to their stabilization. This chain is Lys-63-specific deubiquitinase BRCC36 (BRCC3), found in Pongo abelii (Sumatran orangutan).